The following is a 130-amino-acid chain: Interferon alpha-inducible protein 27-like protein 2 (130 aa).

A run of 3 helical transmembrane segments spans residues A8–F28, M43–L63, and V66–L86. The interval S93–E130 is disordered.

Belongs to the IFI6/IFI27 family.

It is found in the mitochondrion membrane. Plays a role in the apoptotic process and has a pro-apoptotic activity. The chain is Interferon alpha-inducible protein 27-like protein 2 from Homo sapiens (Human).